The primary structure comprises 284 residues: Cell division protein DivIB (284 aa).

Positions 1-10 (MAWLRKKEQQ) are enriched in basic and acidic residues. The segment at 1 to 38 (MAWLRKKEQQSDPLTPWQQYQARQQQTPRHDRRQKPKL) is disordered. Residues 1–56 (MAWLRKKEQQSDPLTPWQQYQARQQQTPRHDRRQKPKLDVNLPKIQTLRRRKLVKN) lie on the Cytoplasmic side of the membrane. The helical transmembrane segment at 57-77 (LVLILLPLLLLLGVFGYFASP) threads the bilayer. Topologically, residues 78 to 284 (LSKVGLVSVQ…YSSSEKSSND (207 aa)) are extracellular. Residues 79-150 (SKVGLVSVQG…NRIIIKTSEY (72 aa)) form the POTRA domain.

This sequence belongs to the FtsQ/DivIB family. DivIB subfamily.

Its subcellular location is the cell membrane. In terms of biological role, cell division protein that may be involved in stabilizing or promoting the assembly of the division complex. In Lacticaseibacillus rhamnosus (strain ATCC 53103 / LMG 18243 / GG) (Lactobacillus rhamnosus), this protein is Cell division protein DivIB.